Consider the following 132-residue polypeptide: Ribosome-binding factor A (132 aa).

The protein belongs to the RbfA family. As to quaternary structure, monomer. Binds 30S ribosomal subunits, but not 50S ribosomal subunits or 70S ribosomes.

It localises to the cytoplasm. One of several proteins that assist in the late maturation steps of the functional core of the 30S ribosomal subunit. Associates with free 30S ribosomal subunits (but not with 30S subunits that are part of 70S ribosomes or polysomes). Required for efficient processing of 16S rRNA. May interact with the 5'-terminal helix region of 16S rRNA. In Pectobacterium carotovorum subsp. carotovorum (strain PC1), this protein is Ribosome-binding factor A.